The following is a 221-amino-acid chain: UPF0502 protein XOO0224 (221 aa).

The protein belongs to the UPF0502 family.

The protein is UPF0502 protein XOO0224 of Xanthomonas oryzae pv. oryzae (strain MAFF 311018).